Consider the following 1391-residue polypeptide: DNA-directed RNA polymerase subunit beta' (1391 aa).

Positions 72, 74, 87, and 90 each coordinate Zn(2+). Positions 462, 464, and 466 each coordinate Mg(2+). Zn(2+)-binding residues include Cys816, Cys890, Cys897, and Cys900.

This sequence belongs to the RNA polymerase beta' chain family. In terms of assembly, the RNAP catalytic core consists of 2 alpha, 1 beta, 1 beta' and 1 omega subunit. When a sigma factor is associated with the core the holoenzyme is formed, which can initiate transcription. It depends on Mg(2+) as a cofactor. Requires Zn(2+) as cofactor.

The catalysed reaction is RNA(n) + a ribonucleoside 5'-triphosphate = RNA(n+1) + diphosphate. Functionally, DNA-dependent RNA polymerase catalyzes the transcription of DNA into RNA using the four ribonucleoside triphosphates as substrates. The polypeptide is DNA-directed RNA polymerase subunit beta' (Neisseria gonorrhoeae (strain ATCC 700825 / FA 1090)).